The primary structure comprises 496 residues: MPIFSTRVLTYLRCIFRLFIGLMLLLTLVGCDFYTPSSQLEQIRQRGEIRVGTIYGSTSYYQRDDLAQGFDYELAKSYADWLGVKLTIVPVYSIAELVELLEKGKLDLAAAAIVVTPERRALFRFGPGFYQVSPKLVYRYGSPKPKDIGDLKGSIVVPAGSTGEDLLRELAKEYPGLKWSTNRDADVEELLKQVADGKIDYTVVQDTVLARTQRYYPELTEGLTLSKNQTVAWAMTKLPDDSLYASIIDFFGQRFMDGAIAKLDEKYFGHVQNFDFVDTRTFLQRAKSLLPKYQDLFKTHARMVDWRLLAAISYQESHWDPQARSYTGVRGMMMLTEPTAKAMGVKDRTHPAESIEGGARYLQHMMEKVPASVPTDEKVWFALTAYNIGYGHMMDARRLTKELGKNPDAWSDVKEVLPLLQQARWHRKVRYGYARGGEARNYVNNVRQYYQSLLWLDNEQQKAHRREELDEDDSSEPQSTERPTVIAEVVKQITLR.

The first 31 residues, 1–31 (MPIFSTRVLTYLRCIFRLFIGLMLLLTLVGC), serve as a signal peptide directing secretion. The segment at 32–271 (DFYTPSSQLE…KLDEKYFGHV (240 aa)) is non-LT domain. The interval 273–496 (NFDFVDTRTF…AEVVKQITLR (224 aa)) is LT domain. E316 is a catalytic residue. Residues 464–485 (HRREELDEDDSSEPQSTERPTV) are disordered.

The protein in the N-terminal section; belongs to the bacterial solute-binding protein 3 family. In the C-terminal section; belongs to the transglycosylase Slt family.

It is found in the cell outer membrane. The enzyme catalyses Exolytic cleavage of the (1-&gt;4)-beta-glycosidic linkage between N-acetylmuramic acid (MurNAc) and N-acetylglucosamine (GlcNAc) residues in peptidoglycan, from either the reducing or the non-reducing ends of the peptidoglycan chains, with concomitant formation of a 1,6-anhydrobond in the MurNAc residue.. Its function is as follows. Murein-degrading enzyme that degrades murein glycan strands and insoluble, high-molecular weight murein sacculi, with the concomitant formation of a 1,6-anhydromuramoyl product. Lytic transglycosylases (LTs) play an integral role in the metabolism of the peptidoglycan (PG) sacculus. Their lytic action creates space within the PG sacculus to allow for its expansion as well as for the insertion of various structures such as secretion systems and flagella. In Aeromonas salmonicida (strain A449), this protein is Membrane-bound lytic murein transglycosylase F.